Consider the following 882-residue polypeptide: DNA mismatch repair protein MutS (882 aa).

627–634 (GPNMAGKS) is an ATP binding site.

This sequence belongs to the DNA mismatch repair MutS family.

Its function is as follows. This protein is involved in the repair of mismatches in DNA. It is possible that it carries out the mismatch recognition step. This protein has a weak ATPase activity. The protein is DNA mismatch repair protein MutS of Anaeromyxobacter dehalogenans (strain 2CP-C).